The following is a 192-amino-acid chain: Epididymal-specific lipocalin-5 (192 aa).

An N-terminal signal peptide occupies residues 1-26; it reads MCSVARHMESIMLFTLLGLCVGLAAG. A disulfide bond links Cys-89 and Cys-183.

The protein belongs to the calycin superfamily. Lipocalin family. In terms of processing, 2 different forms with differently processed N-termini exist. As to expression, epididymal fluid of the caudal and corpus regions (at protein level).

The protein localises to the secreted. Its function is as follows. Associates with spermatozoa in the epididymal fluid but does not bind tightly to them. Binds both all-trans and 13-cis retinoic acid. May act as a retinoid carrier protein which is required for epididymal function and/or sperm maturation. In Mus musculus (Mouse), this protein is Epididymal-specific lipocalin-5.